The chain runs to 570 residues: Probable D-xylulose kinase A (570 aa).

Substrate contacts are provided by histidine 95, arginine 166, aspartate 282, and asparagine 283. ATP-binding positions include tryptophan 364, 469–470, and asparagine 473; that span reads GG.

Belongs to the FGGY kinase family.

The protein localises to the cytoplasm. It carries out the reaction D-xylulose + ATP = D-xylulose 5-phosphate + ADP + H(+). Its function is as follows. Highly specific D-xylulose kinase which participates in the catabolism of xylose. Xylose is a major component of hemicelluloses such as xylan. Most fungi utilize D-xylose via three enzymatic reactions, xylose reductase (XR), xylitol dehydrogenase (XDH), and xylulokinase, to form xylulose 5-phosphate, which enters pentose phosphate pathway. This chain is Probable D-xylulose kinase A (xkiA), found in Aspergillus niger (strain ATCC MYA-4892 / CBS 513.88 / FGSC A1513).